Reading from the N-terminus, the 232-residue chain is 5'-methylthioadenosine/S-adenosylhomocysteine nucleosidase (232 aa).

E14 (proton acceptor) is an active-site residue. Residues G80, V154, and 175–176 contribute to the substrate site; that span reads ME. The Proton donor role is filled by D199.

Belongs to the PNP/UDP phosphorylase family. MtnN subfamily.

It carries out the reaction S-adenosyl-L-homocysteine + H2O = S-(5-deoxy-D-ribos-5-yl)-L-homocysteine + adenine. It catalyses the reaction S-methyl-5'-thioadenosine + H2O = 5-(methylsulfanyl)-D-ribose + adenine. The enzyme catalyses 5'-deoxyadenosine + H2O = 5-deoxy-D-ribose + adenine. The protein operates within amino-acid biosynthesis; L-methionine biosynthesis via salvage pathway; S-methyl-5-thio-alpha-D-ribose 1-phosphate from S-methyl-5'-thioadenosine (hydrolase route): step 1/2. In terms of biological role, catalyzes the irreversible cleavage of the glycosidic bond in both 5'-methylthioadenosine (MTA) and S-adenosylhomocysteine (SAH/AdoHcy) to adenine and the corresponding thioribose, 5'-methylthioribose and S-ribosylhomocysteine, respectively. Also cleaves 5'-deoxyadenosine, a toxic by-product of radical S-adenosylmethionine (SAM) enzymes, into 5-deoxyribose and adenine. The polypeptide is 5'-methylthioadenosine/S-adenosylhomocysteine nucleosidase (Haemophilus ducreyi (strain 35000HP / ATCC 700724)).